The sequence spans 415 residues: MSKRRVVVTGMGMLSPVGNTVESSWKALLEGQSGIVNIEHFDATNFSTRFAGLVKDFDCTEYMSKKDARKMDLFIQYGIAAGIQALDDSGLEITEENAARVGVAIGSGIGGLDLIEAGHSALVEKGPRKVSPFFVPSTIVNMVAGNLSIMRGLRGPNIAISTACTTGLHNIGHAARMIAYGDAEAMVAGGAEKASTPLGMAGFGAAKALSTRNDEPQKASRPWDKGRDGFVLGDGAGVMVLEEYEHAKARGAKIYAELVGFGMSGDAYHMTSPSEDGSGGALAMEAAMRDANITGTQVGYVNAHGTSTPAGDVAEIKGVKRALGEEGSKQVLVSSTKSMTGHLLGAAGSVEAIITVLSLVDQIVPPTINLDDPEEGLDIDLVPHTARKVDMEYAICNSFGFGGTNGSLVFKKIAE.

The Ketosynthase family 3 (KS3) domain maps to 3-412 (KRRVVVTGMG…GTNGSLVFKK (410 aa)). Active-site for beta-ketoacyl synthase activity residues include Cys164, His304, and His342.

This sequence belongs to the thiolase-like superfamily. Beta-ketoacyl-ACP synthases family. Homodimer.

The catalysed reaction is a fatty acyl-[ACP] + malonyl-[ACP] + H(+) = a 3-oxoacyl-[ACP] + holo-[ACP] + CO2. It carries out the reaction (9Z)-hexadecenoyl-[ACP] + malonyl-[ACP] + H(+) = 3-oxo-(11Z)-octadecenoyl-[ACP] + holo-[ACP] + CO2. Its pathway is lipid metabolism; fatty acid biosynthesis. In terms of biological role, involved in the type II fatty acid elongation cycle. Catalyzes the elongation of a wide range of acyl-ACP by the addition of two carbons from malonyl-ACP to an acyl acceptor. Can efficiently catalyze the conversion of palmitoleoyl-ACP (cis-hexadec-9-enoyl-ACP) to cis-vaccenoyl-ACP (cis-octadec-11-enoyl-ACP), an essential step in the thermal regulation of fatty acid composition. The protein is 3-oxoacyl-[acyl-carrier-protein] synthase 2 (fabF) of Vibrio harveyi (Beneckea harveyi).